The following is a 156-amino-acid chain: Transcription antitermination protein NusB (156 aa).

It belongs to the NusB family.

Involved in transcription antitermination. Required for transcription of ribosomal RNA (rRNA) genes. Binds specifically to the boxA antiterminator sequence of the ribosomal RNA (rrn) operons. The chain is Transcription antitermination protein NusB from Rickettsia africae (strain ESF-5).